A 339-amino-acid polypeptide reads, in one-letter code: UDP-N-acetylglucosamine--N-acetylmuramyl-(pentapeptide) pyrophosphoryl-undecaprenol N-acetylglucosamine transferase (339 aa).

UDP-N-acetyl-alpha-D-glucosamine contacts are provided by residues 9-11 (TGG), Asn119, Arg160, Ser188, and Gln280.

Belongs to the glycosyltransferase 28 family. MurG subfamily.

Its subcellular location is the cell inner membrane. It carries out the reaction di-trans,octa-cis-undecaprenyl diphospho-N-acetyl-alpha-D-muramoyl-L-alanyl-D-glutamyl-meso-2,6-diaminopimeloyl-D-alanyl-D-alanine + UDP-N-acetyl-alpha-D-glucosamine = di-trans,octa-cis-undecaprenyl diphospho-[N-acetyl-alpha-D-glucosaminyl-(1-&gt;4)]-N-acetyl-alpha-D-muramoyl-L-alanyl-D-glutamyl-meso-2,6-diaminopimeloyl-D-alanyl-D-alanine + UDP + H(+). It functions in the pathway cell wall biogenesis; peptidoglycan biosynthesis. Functionally, cell wall formation. Catalyzes the transfer of a GlcNAc subunit on undecaprenyl-pyrophosphoryl-MurNAc-pentapeptide (lipid intermediate I) to form undecaprenyl-pyrophosphoryl-MurNAc-(pentapeptide)GlcNAc (lipid intermediate II). This Thermus thermophilus (strain ATCC BAA-163 / DSM 7039 / HB27) protein is UDP-N-acetylglucosamine--N-acetylmuramyl-(pentapeptide) pyrophosphoryl-undecaprenol N-acetylglucosamine transferase.